Consider the following 100-residue polypeptide: Small ribosomal subunit protein uS14c (100 aa).

The span at 1-10 (MARKGLIERE) shows a compositional bias: basic and acidic residues. The tract at residues 1-29 (MARKGLIEREKKRKKLEQKYHSIRGSSKK) is disordered.

This sequence belongs to the universal ribosomal protein uS14 family. In terms of assembly, part of the 30S ribosomal subunit.

The protein localises to the plastid. It is found in the chloroplast. Functionally, binds 16S rRNA, required for the assembly of 30S particles. This chain is Small ribosomal subunit protein uS14c, found in Acorus calamus (Sweet flag).